Consider the following 233-residue polypeptide: Protein-methionine-sulfoxide reductase heme-binding subunit MsrQ (233 aa).

Helical transmembrane passes span 13-33 (IKAA…HGLW), 44-64 (ALTR…LCVS), 81-101 (MLGL…LWLD), 117-137 (PFIT…LTSS), 151-171 (SLHR…LWLV), and 174-194 (VALL…GWRV). The Ferric oxidoreductase domain occupies 50–164 (GIWTLNFLFL…AVYAVAILGV (115 aa)).

The protein belongs to the MsrQ family. In terms of assembly, heterodimer of a catalytic subunit (MsrP) and a heme-binding subunit (MsrQ).

It localises to the cell inner membrane. Its function is as follows. Part of the MsrPQ system that repairs oxidized periplasmic proteins containing methionine sulfoxide residues (Met-O), using respiratory chain electrons. Thus protects these proteins from oxidative-stress damage caused by reactive species of oxygen and chlorine generated by the host defense mechanisms. MsrPQ is essential for the maintenance of envelope integrity under bleach stress, rescuing a wide series of structurally unrelated periplasmic proteins from methionine oxidation. MsrQ provides electrons for reduction to the reductase catalytic subunit MsrP, using the quinone pool of the respiratory chain. Probably involved in protection against reactive chlorine species (RCS) generated by chlorite and hypochlorite. The chain is Protein-methionine-sulfoxide reductase heme-binding subunit MsrQ from Azospira oryzae (strain ATCC BAA-33 / DSM 13638 / PS) (Dechlorosoma suillum).